Consider the following 638-residue polypeptide: Phosphomethylpyrimidine synthase (638 aa).

Substrate is bound by residues N236, M265, Y294, H330, 350-352 (SRG), 391-394 (DGLR), and E430. A Zn(2+)-binding site is contributed by H434. Residue Y457 participates in substrate binding. H498 lines the Zn(2+) pocket. C578, C581, and C586 together coordinate [4Fe-4S] cluster. The span at 608–624 (AEGASQQEAEQGMQEMS) shows a compositional bias: low complexity. Positions 608–633 (AEGASQQEAEQGMQEMSQKYKDAGRR) are disordered.

It belongs to the ThiC family. As to quaternary structure, homodimer. Requires [4Fe-4S] cluster as cofactor.

It carries out the reaction 5-amino-1-(5-phospho-beta-D-ribosyl)imidazole + S-adenosyl-L-methionine = 4-amino-2-methyl-5-(phosphooxymethyl)pyrimidine + CO + 5'-deoxyadenosine + formate + L-methionine + 3 H(+). The protein operates within cofactor biosynthesis; thiamine diphosphate biosynthesis. Catalyzes the synthesis of the hydroxymethylpyrimidine phosphate (HMP-P) moiety of thiamine from aminoimidazole ribotide (AIR) in a radical S-adenosyl-L-methionine (SAM)-dependent reaction. The polypeptide is Phosphomethylpyrimidine synthase (Hahella chejuensis (strain KCTC 2396)).